The sequence spans 431 residues: Inactive polypeptide N-acetylgalactosaminyltransferase-like protein 5 (431 aa).

The Cytoplasmic segment spans residues 1-4; the sequence is MKSV. The chain crosses the membrane as a helical; Signal-anchor for type II membrane protein span at residues 5 to 27; sequence IIQGLFCGFLAIGLWASMLLLFL. Residues 28-431 are Lumenal-facing; that stretch reads HLEQEDMLEN…TERKRKKNRF (404 aa). N-linked (GlcNAc...) asparagine glycosylation occurs at Asn-68. 2 cysteine pairs are disulfide-bonded: Cys-105–Cys-336 and Cys-327–Cys-403. The interval 114-224 is catalytic subdomain A; the sequence is LPTASIIICF…RVWLEPLLHA (111 aa). The catalytic subdomain B stretch occupies residues 282 to 344; the sequence is PIRSPAMTGG…PCSRVGYNSK (63 aa). 2 N-linked (GlcNAc...) asparagine glycosylation sites follow: Asn-353 and Asn-390.

Belongs to the glycosyltransferase 2 family. GalNAc-T subfamily. Mn(2+) serves as cofactor. In terms of tissue distribution, expressed in testis. Mainly expressed in the round and elongated spermatids during spermiogenesis, not in the outermost cells of the seminiferous tubules, which contain spermatogonia and somatic Sertoli cells. Present in the juxtanuclear space in the round spermatids, not in the acrosomal vesicles. In the elongating spermatids, localizes strongly in the acroplaxome, the region between the developing acrosome and nucleus. During differentiation, also weakly detected in the transient manchette containing microtubules. In epididymal spermatozoa, weakly detected in the midpiece, but concentrates mainly in the neck region around the head-tail coupling apparatus (at protein level).

It localises to the late endosome membrane. Probable inactive glycosyltransferase required during spermatid development. May participate in protein loading into the acrosomes and accumulation of ubiquitin-proteasome systems around the head-tail coupling apparatus region. The chain is Inactive polypeptide N-acetylgalactosaminyltransferase-like protein 5 (Galntl5) from Mus musculus (Mouse).